Reading from the N-terminus, the 488-residue chain is Putative BTB/POZ domain-containing protein L674 (488 aa).

One can recognise a BTB domain in the interval 83–150 (NIVYFNIGGK…VKNQKCPINN (68 aa)).

This sequence belongs to the mimivirus BTB/WD family.

In Acanthamoeba polyphaga (Amoeba), this protein is Putative BTB/POZ domain-containing protein L674.